The chain runs to 549 residues: Chaperonin GroEL (549 aa).

ATP contacts are provided by residues 29-32 (TAGP), Lys50, 86-90 (DGTTT), Gly418, and Asp499.

This sequence belongs to the chaperonin (HSP60) family. As to quaternary structure, forms a cylinder of 14 subunits composed of two heptameric rings stacked back-to-back. Interacts with the co-chaperonin GroES.

The protein localises to the cytoplasm. The enzyme catalyses ATP + H2O + a folded polypeptide = ADP + phosphate + an unfolded polypeptide.. Together with its co-chaperonin GroES, plays an essential role in assisting protein folding. The GroEL-GroES system forms a nano-cage that allows encapsulation of the non-native substrate proteins and provides a physical environment optimized to promote and accelerate protein folding. In Wolbachia pipientis wMel, this protein is Chaperonin GroEL.